We begin with the raw amino-acid sequence, 832 residues long: Valine--tRNA ligase (832 aa).

Positions 41 to 51 (PNVTGKLHLGH) match the 'HIGH' region motif. Positions 512–516 (KMSKS) match the 'KMSKS' region motif. Residue Lys-515 coordinates ATP. Positions 760-831 (FIEISQEQKQ…QIYLEELKWK (72 aa)) form a coiled coil.

This sequence belongs to the class-I aminoacyl-tRNA synthetase family. ValS type 1 subfamily. In terms of assembly, monomer.

It localises to the cytoplasm. The catalysed reaction is tRNA(Val) + L-valine + ATP = L-valyl-tRNA(Val) + AMP + diphosphate. In terms of biological role, catalyzes the attachment of valine to tRNA(Val). As ValRS can inadvertently accommodate and process structurally similar amino acids such as threonine, to avoid such errors, it has a 'posttransfer' editing activity that hydrolyzes mischarged Thr-tRNA(Val) in a tRNA-dependent manner. The chain is Valine--tRNA ligase from Mycoplasmopsis synoviae (strain 53) (Mycoplasma synoviae).